The following is a 1486-amino-acid chain: Chromosome partition protein MukB (1486 aa).

34–41 (GGNGAGKS) serves as a coordination point for ATP. Coiled-coil stretches lie at residues 326 to 418 (LEAD…QYNQ), 444 to 480 (LETF…QAYQ), and 509 to 603 (RHLA…RAPV). A flexible hinge region spans residues 666 to 783 (PGGSEDQRLN…EVPLFGRAAR (118 aa)). 3 coiled-coil regions span residues 835–923 (EAEI…AKLE), 977–1115 (EMLS…TAKA), and 1209–1266 (VEAI…QNVS).

This sequence belongs to the SMC family. MukB subfamily. In terms of assembly, homodimerization via its hinge domain. Binds to DNA via its C-terminal region. Interacts, and probably forms a ternary complex, with MukE and MukF via its C-terminal region. The complex formation is stimulated by calcium or magnesium. Interacts with tubulin-related protein FtsZ.

It localises to the cytoplasm. Its subcellular location is the nucleoid. In terms of biological role, plays a central role in chromosome condensation, segregation and cell cycle progression. Functions as a homodimer, which is essential for chromosome partition. Involved in negative DNA supercoiling in vivo, and by this means organize and compact chromosomes. May achieve or facilitate chromosome segregation by condensation DNA from both sides of a centrally located replisome during cell division. The polypeptide is Chromosome partition protein MukB (Escherichia coli O1:K1 / APEC).